Reading from the N-terminus, the 121-residue chain is Putative iron-sulfur cluster insertion protein ErpA 1 (121 aa).

Iron-sulfur cluster is bound by residues cysteine 49, cysteine 113, and cysteine 115.

The protein belongs to the HesB/IscA family. In terms of assembly, homodimer. It depends on iron-sulfur cluster as a cofactor.

Functionally, required for insertion of 4Fe-4S clusters. This is Putative iron-sulfur cluster insertion protein ErpA 1 from Polaromonas naphthalenivorans (strain CJ2).